The primary structure comprises 364 residues: Very-long-chain (3R)-3-hydroxyacyl-CoA dehydratase 3 (364 aa).

The Cytoplasmic portion of the chain corresponds to 1-151 (MAMENQVLTP…ETLTNLRKGY (151 aa)). Residues 7–96 (VLTPHVYWAQ…KVSQWWERLT (90 aa)) enclose the CS domain. Phosphothreonine is present on threonine 9. Positions 113 to 138 (LDESDAEMELRAKEEERLNKLRLESE) form a coiled coil. A phosphoserine mark is found at serine 116 and serine 137. A helical transmembrane segment spans residues 152 to 172 (LFMYNLVQFLGFSWIFVNLTV). The Lumenal segment spans residues 173 to 191 (RFCILGKESFYDTFHTVAD). A helical transmembrane segment spans residues 192–212 (MMYFCQMLAVVETINAAIGVT). Residues 213 to 214 (TS) are Cytoplasmic-facing. Residues 215-235 (PVLPSLIQLLGRNFILFIIFG) form a helical membrane-spanning segment. Over 236-244 (TMEEMQNKA) the chain is Lumenal. The chain crosses the membrane as a helical span at residues 245-265 (VVFFVFYLWSAIEIFRYSFYM). Topologically, residues 266 to 282 (LTCIDMDWEVLTWLRYT) are cytoplasmic. Residues 283-303 (LWIPLYPLGCLAEAVSVVQSI) form a helical membrane-spanning segment. Active-site residues include tyrosine 288 and glutamate 295. At 304-324 (PIFNETGRFSFTLPYPVKIKV) the chain is on the lumenal side. The chain crosses the membrane as a helical span at residues 325-345 (RFSFFLQIYLIMIFLGLYINF). Residues 346–364 (RHLYKQRRRRYGQKKKKIH) are Cytoplasmic-facing.

This sequence belongs to the very long-chain fatty acids dehydratase HACD family. May interact with enzymes of the ELO family (including ELOVL1); with those enzymes that mediate condensation, the first of the four steps of the reaction cycle responsible for fatty acids elongation, may be part of a larger fatty acids elongase complex. Interacts with RAC1.

It localises to the endoplasmic reticulum membrane. It catalyses the reaction a very-long-chain (3R)-3-hydroxyacyl-CoA = a very-long-chain (2E)-enoyl-CoA + H2O. The enzyme catalyses (3R)-hydroxyhexadecanoyl-CoA = (2E)-hexadecenoyl-CoA + H2O. It functions in the pathway lipid metabolism; fatty acid biosynthesis. Catalyzes the third of the four reactions of the long-chain fatty acids elongation cycle. This endoplasmic reticulum-bound enzymatic process, allows the addition of two carbons to the chain of long- and very long-chain fatty acids/VLCFAs per cycle. This enzyme catalyzes the dehydration of the 3-hydroxyacyl-CoA intermediate into trans-2,3-enoyl-CoA, within each cycle of fatty acid elongation. Thereby, it participates in the production of VLCFAs of different chain lengths that are involved in multiple biological processes as precursors of membrane lipids and lipid mediators. Involved in Rac1-signaling pathways leading to the modulation of gene expression. The chain is Very-long-chain (3R)-3-hydroxyacyl-CoA dehydratase 3 from Pongo abelii (Sumatran orangutan).